Consider the following 425-residue polypeptide: Serine--tRNA ligase (425 aa).

230–232 (TAE) serves as a coordination point for L-serine. 261 to 263 (RSE) is an ATP binding site. E284 provides a ligand contact to L-serine. Residue 348 to 351 (EISS) participates in ATP binding. S384 is a binding site for L-serine.

It belongs to the class-II aminoacyl-tRNA synthetase family. Type-1 seryl-tRNA synthetase subfamily. In terms of assembly, homodimer. The tRNA molecule binds across the dimer.

The protein resides in the cytoplasm. It catalyses the reaction tRNA(Ser) + L-serine + ATP = L-seryl-tRNA(Ser) + AMP + diphosphate + H(+). The catalysed reaction is tRNA(Sec) + L-serine + ATP = L-seryl-tRNA(Sec) + AMP + diphosphate + H(+). It functions in the pathway aminoacyl-tRNA biosynthesis; selenocysteinyl-tRNA(Sec) biosynthesis; L-seryl-tRNA(Sec) from L-serine and tRNA(Sec): step 1/1. Its function is as follows. Catalyzes the attachment of serine to tRNA(Ser). Is also able to aminoacylate tRNA(Sec) with serine, to form the misacylated tRNA L-seryl-tRNA(Sec), which will be further converted into selenocysteinyl-tRNA(Sec). The sequence is that of Serine--tRNA ligase from Streptococcus sanguinis (strain SK36).